A 448-amino-acid polypeptide reads, in one-letter code: Exodeoxyribonuclease 7 large subunit (448 aa).

This sequence belongs to the XseA family. As to quaternary structure, heterooligomer composed of large and small subunits.

It localises to the cytoplasm. The enzyme catalyses Exonucleolytic cleavage in either 5'- to 3'- or 3'- to 5'-direction to yield nucleoside 5'-phosphates.. Its function is as follows. Bidirectionally degrades single-stranded DNA into large acid-insoluble oligonucleotides, which are then degraded further into small acid-soluble oligonucleotides. The sequence is that of Exodeoxyribonuclease 7 large subunit from Exiguobacterium sp. (strain ATCC BAA-1283 / AT1b).